The following is a 448-amino-acid chain: Phosphoglucosamine mutase (448 aa).

S100 functions as the Phosphoserine intermediate in the catalytic mechanism. Mg(2+)-binding residues include S100, D240, D242, and D244. Position 100 is a phosphoserine (S100).

Belongs to the phosphohexose mutase family. The cofactor is Mg(2+). In terms of processing, activated by phosphorylation.

The catalysed reaction is alpha-D-glucosamine 1-phosphate = D-glucosamine 6-phosphate. Catalyzes the conversion of glucosamine-6-phosphate to glucosamine-1-phosphate. This Clostridium acetobutylicum (strain ATCC 824 / DSM 792 / JCM 1419 / IAM 19013 / LMG 5710 / NBRC 13948 / NRRL B-527 / VKM B-1787 / 2291 / W) protein is Phosphoglucosamine mutase.